Consider the following 222-residue polypeptide: Glutathione S-transferase A4 (222 aa).

At methionine 1 the chain carries N-acetylmethionine. In terms of domain architecture, GST N-terminal spans alanine 3–glycine 83. Residues tyrosine 9, glutamine 54–valine 55, and glutamine 67–threonine 68 contribute to the glutathione site. The region spanning asparagine 85–proline 208 is the GST C-terminal domain. A substrate-binding site is contributed by tyrosine 212.

Belongs to the GST superfamily. Alpha family. Homodimer. In terms of tissue distribution, expressed at a high level in brain, placenta, and skeletal muscle and much lower in lung and liver.

The protein localises to the cytoplasm. The catalysed reaction is RX + glutathione = an S-substituted glutathione + a halide anion + H(+). Functionally, conjugation of reduced glutathione to a wide number of exogenous and endogenous hydrophobic electrophiles. This isozyme has a high catalytic efficiency with 4-hydroxyalkenals such as 4-hydroxynonenal (4-HNE). This Homo sapiens (Human) protein is Glutathione S-transferase A4 (GSTA4).